A 294-amino-acid polypeptide reads, in one-letter code: 26S proteasome regulatory subunit RPN11 (294 aa).

Residues 21-156 (VQISSLALLK…IDAFRLIDNQ (136 aa)) form the MPN domain. Histidine 103, histidine 105, and aspartate 116 together coordinate Zn(2+). Positions 103–116 (HSHPGFGCWLSTVD) match the JAMM motif motif.

This sequence belongs to the peptidase M67A family. In terms of assembly, the 26S proteasome consists of a 20S proteasome core and two 19S regulatory subunits. The 20S proteasome core is composed of 28 subunits that are arranged in four stacked rings, resulting in a barrel-shaped structure. The two end rings are each formed by seven alpha subunits, and the two central rings are each formed by seven beta subunits. The catalytic chamber with the active sites is on the inside of the barrel.

It localises to the cytoplasm. It is found in the nucleus. Functionally, acts as a regulatory subunit of the 26S proteasome which degrades poly-ubiquitinated proteins in the cytoplasm and in the nucleus. It is essential for the regulated turnover of proteins and for the removal of misfolded proteins. The proteasome is a multicatalytic proteinase complex that is characterized by its ability to cleave peptides with Arg, Phe, Tyr, Leu, and Glu adjacent to the leaving group at neutral or slightly basic pH. The sequence is that of 26S proteasome regulatory subunit RPN11 (RPN11) from Encephalitozoon cuniculi (strain GB-M1) (Microsporidian parasite).